The sequence spans 326 residues: uncharacterized protein (326 aa).

Substrate is bound at residue serine 132. Tyrosine 157 functions as the Proton acceptor in the catalytic mechanism.

The protein belongs to the NAD(P)-dependent epimerase/dehydratase family. dTDP-glucose dehydratase subfamily.

This is an uncharacterized protein from Methanocaldococcus jannaschii (strain ATCC 43067 / DSM 2661 / JAL-1 / JCM 10045 / NBRC 100440) (Methanococcus jannaschii).